We begin with the raw amino-acid sequence, 677 residues long: Heat shock transcription factor (677 aa).

2 disordered regions span residues methionine 1–asparagine 56 and serine 115–proline 164. Composition is skewed to polar residues over residues serine 115–threonine 131 and glutamine 143–proline 164. A DNA-binding region spans residues alanine 193 to glutamine 297. Residues glutamate 320 to valine 373 form an involved in trimerization region. 2 stretches are compositionally biased toward low complexity: residues asparagine 400–asparagine 416 and arginine 457–glutamine 501. Disordered stretches follow at residues asparagine 400–glutamine 444, arginine 457–serine 541, and lysine 606–alanine 677. The segment at asparagine 466–alanine 677 is activatory. Composition is skewed to polar residues over residues phenylalanine 502–serine 541 and phenylalanine 629–proline 641. A compositionally biased stretch (basic and acidic residues) spans glutamate 650–asparagine 669.

It belongs to the HSF family. In terms of assembly, homotrimer. Homotrimerization increases the affinity of HSF1 to DNA. In terms of processing, exhibits temperature-dependent phosphorylation.

It localises to the nucleus. Its function is as follows. DNA-binding transcription factor that specifically binds heat shock promoter elements (HSE) and activates transcription. The chain is Heat shock transcription factor from Kluyveromyces lactis (strain ATCC 8585 / CBS 2359 / DSM 70799 / NBRC 1267 / NRRL Y-1140 / WM37) (Yeast).